Here is a 776-residue protein sequence, read N- to C-terminus: Ribosomal biogenesis protein LAS1L (776 aa).

Acidic residues predominate over residues 185 to 227 (DEDQLDAEDPEEEEREIIADDVLEEIPEPQDDDKDEELAVEDD). Residues 185–247 (DEDQLDAEDP…SHPEPSSRHK (63 aa)) are disordered. Basic and acidic residues predominate over residues 228 to 247 (ANTKGNEEVASHPEPSSRHK). Ser-425 and Ser-509 each carry phosphoserine. The tract at residues 501–646 (KAIEGSSSSS…DYDDDEEEDR (146 aa)) is disordered. Residues 544 to 557 (GNLKDVKQEEKKEN) are compositionally biased toward basic and acidic residues. 2 stretches are compositionally biased toward acidic residues: residues 558 to 602 (EEEE…EEEE) and 611 to 646 (MEAD…EEDR). Ser-658 carries the phosphoserine modification. The segment at 677–696 (SAWQVSSEDVRWGTFPLGRL) is interaction with NOL9. A disordered region spans residues 733-759 (SSTLSLCCGGSNTNSSSSSSSGNMEGL). Positions 741-755 (GGSNTNSSSSSSSGN) are enriched in low complexity.

Belongs to the LAS1 family. As to quaternary structure, component of some MLL1/MLL complex, at least composed of the core components KMT2A/MLL1, ASH2L, HCFC1/HCF1, WDR5 and RBBP5, as well as the facultative components BACC1, CHD8, E2F6, HSP70, INO80C, KANSL1, LAS1L, MAX, MCRS1, MGA, MYST1/MOF, PELP1, PHF20, PRP31, RING2, RUVB1/TIP49A, RUVB2/TIP49B, SENP3, TAF1, TAF4, TAF6, TAF7, TAF9 and TEX10. Component of the 5FMC complex, at least composed of PELP1, LAS1L, TEX10, WDR18 and SENP3; the complex interacts with methylated CHTOP and ZNF148. Interacts with NOL9 to form an ITS2 pre-rRNA endonuclease-kinase complex.

The protein localises to the nucleus. Its subcellular location is the nucleolus. The protein resides in the nucleoplasm. It localises to the cytoplasm. In terms of biological role, required for the synthesis of the 60S ribosomal subunit and maturation of the 28S rRNA. Functions as a component of the Five Friends of Methylated CHTOP (5FMC) complex; the 5FMC complex is recruited to ZNF148 by methylated CHTOP, leading to desumoylation of ZNF148 and subsequent transactivation of ZNF148 target genes. Required for the efficient pre-rRNA processing at both ends of internal transcribed spacer 2 (ITS2). This Mus musculus (Mouse) protein is Ribosomal biogenesis protein LAS1L (Las1l).